Reading from the N-terminus, the 73-residue chain is Putative antitoxin VapB18 (73 aa).

It belongs to the UPF0330 family.

Its function is as follows. Possibly the antitoxin component of a type II toxin-antitoxin (TA) system. Its cognate toxin is VapC18 (Potential). In Archaeoglobus fulgidus (strain ATCC 49558 / DSM 4304 / JCM 9628 / NBRC 100126 / VC-16), this protein is Putative antitoxin VapB18 (vapB18).